The sequence spans 83 residues: Small integral membrane protein 22 (83 aa).

The chain crosses the membrane as a helical span at residues 32-52; it reads VAFIVFLTFMGTVLLLLLLVV. Residues 60–83 form a disordered region; the sequence is SPGPRRESPRKERPKGVDNLALEP. The segment covering 63 to 75 has biased composition (basic and acidic residues); sequence PRRESPRKERPKG.

Interacts with CANX and DDOST. Interacts with SQLE; this interaction modulates lipid droplet formation.

The protein localises to the membrane. The protein resides in the late endosome. In terms of biological role, may modulate lipid droplet formation throught interaction with SQLE. This chain is Small integral membrane protein 22, found in Homo sapiens (Human).